The primary structure comprises 162 residues: Cyanate hydratase (162 aa).

Residues Arg102, Glu105, and Ser128 contribute to the active site.

This sequence belongs to the cyanase family.

It carries out the reaction cyanate + hydrogencarbonate + 3 H(+) = NH4(+) + 2 CO2. In terms of biological role, catalyzes the reaction of cyanate with bicarbonate to produce ammonia and carbon dioxide. This is Cyanate hydratase from Mycosarcoma maydis (Corn smut fungus).